The following is a 242-amino-acid chain: Probable 2-phosphosulfolactate phosphatase (242 aa).

This sequence belongs to the ComB family. The cofactor is Mg(2+).

The catalysed reaction is (2R)-O-phospho-3-sulfolactate + H2O = (2R)-3-sulfolactate + phosphate. This Synechococcus sp. (strain JA-2-3B'a(2-13)) (Cyanobacteria bacterium Yellowstone B-Prime) protein is Probable 2-phosphosulfolactate phosphatase.